The sequence spans 73 residues: U3-agatoxin-Ao1e (73 aa).

Positions 1 to 20 are cleaved as a signal peptide; that stretch reads MRTIISLLLLSAMVFAVIEA. A propeptide spanning residues 21-34 is cleaved from the precursor; that stretch reads ISLEEGLQLFEGER. 4 disulfide bridges follow: Cys-36-Cys-52, Cys-43-Cys-57, Cys-51-Cys-67, and Cys-59-Cys-65. Asn-71 carries the asparagine amide modification.

It belongs to the neurotoxin 07 (Beta/delta-agtx) family. 03 (aga-4) subfamily. Aga sub-subfamily. As to expression, expressed by the venom gland.

It is found in the secreted. Insecticidal neurotoxin that induces an irreversible spastic paralysis when injected into insects. Modifies presynaptic voltage-gated sodium channels (Nav), causing them to open at the normal resting potential of the nerve. This leads to spontaneous release of neurotransmitter and repetitive action potentials in motor neurons. In Agelena orientalis (Funnel-web spider), this protein is U3-agatoxin-Ao1e.